A 411-amino-acid chain; its full sequence is Dual-specificity RNA methyltransferase RlmN (411 aa).

Catalysis depends on E124, which acts as the Proton acceptor. The region spanning 130-379 (EEGRGTLCIS…IRTPRGRDIL (250 aa)) is the Radical SAM core domain. Residues C137 and C382 are joined by a disulfide bond. C144, C148, and C151 together coordinate [4Fe-4S] cluster. Residues 208 to 209 (GE), S240, 262 to 264 (SLH), and N339 each bind S-adenosyl-L-methionine. C382 acts as the S-methylcysteine intermediate in catalysis.

The protein belongs to the radical SAM superfamily. RlmN family. It depends on [4Fe-4S] cluster as a cofactor.

The protein resides in the cytoplasm. It carries out the reaction adenosine(2503) in 23S rRNA + 2 reduced [2Fe-2S]-[ferredoxin] + 2 S-adenosyl-L-methionine = 2-methyladenosine(2503) in 23S rRNA + 5'-deoxyadenosine + L-methionine + 2 oxidized [2Fe-2S]-[ferredoxin] + S-adenosyl-L-homocysteine. The enzyme catalyses adenosine(37) in tRNA + 2 reduced [2Fe-2S]-[ferredoxin] + 2 S-adenosyl-L-methionine = 2-methyladenosine(37) in tRNA + 5'-deoxyadenosine + L-methionine + 2 oxidized [2Fe-2S]-[ferredoxin] + S-adenosyl-L-homocysteine. Specifically methylates position 2 of adenine 2503 in 23S rRNA and position 2 of adenine 37 in tRNAs. m2A2503 modification seems to play a crucial role in the proofreading step occurring at the peptidyl transferase center and thus would serve to optimize ribosomal fidelity. In Sinorhizobium fredii (strain NBRC 101917 / NGR234), this protein is Dual-specificity RNA methyltransferase RlmN.